Consider the following 216-residue polypeptide: Phosphatidylserine decarboxylase proenzyme (216 aa).

S185 serves as the catalytic Schiff-base intermediate with substrate; via pyruvic acid. S185 is subject to Pyruvic acid (Ser); by autocatalysis.

It belongs to the phosphatidylserine decarboxylase family. PSD-A subfamily. Heterodimer of a large membrane-associated beta subunit and a small pyruvoyl-containing alpha subunit. Pyruvate is required as a cofactor. Is synthesized initially as an inactive proenzyme. Formation of the active enzyme involves a self-maturation process in which the active site pyruvoyl group is generated from an internal serine residue via an autocatalytic post-translational modification. Two non-identical subunits are generated from the proenzyme in this reaction, and the pyruvate is formed at the N-terminus of the alpha chain, which is derived from the carboxyl end of the proenzyme. The post-translation cleavage follows an unusual pathway, termed non-hydrolytic serinolysis, in which the side chain hydroxyl group of the serine supplies its oxygen atom to form the C-terminus of the beta chain, while the remainder of the serine residue undergoes an oxidative deamination to produce ammonia and the pyruvoyl prosthetic group on the alpha chain.

The protein resides in the cell membrane. The enzyme catalyses a 1,2-diacyl-sn-glycero-3-phospho-L-serine + H(+) = a 1,2-diacyl-sn-glycero-3-phosphoethanolamine + CO2. It functions in the pathway phospholipid metabolism; phosphatidylethanolamine biosynthesis; phosphatidylethanolamine from CDP-diacylglycerol: step 2/2. Functionally, catalyzes the formation of phosphatidylethanolamine (PtdEtn) from phosphatidylserine (PtdSer). This chain is Phosphatidylserine decarboxylase proenzyme, found in Nitrosomonas eutropha (strain DSM 101675 / C91 / Nm57).